A 260-amino-acid chain; its full sequence is Proteasome subunit alpha (260 aa).

This sequence belongs to the peptidase T1A family. As to quaternary structure, the 20S proteasome core is composed of 14 alpha and 14 beta subunits that assemble into four stacked heptameric rings, resulting in a barrel-shaped structure. The two inner rings, each composed of seven catalytic beta subunits, are sandwiched by two outer rings, each composed of seven alpha subunits. The catalytic chamber with the active sites is on the inside of the barrel. Has a gated structure, the ends of the cylinder being occluded by the N-termini of the alpha-subunits. Is capped at one or both ends by the proteasome regulatory ATPase, PAN.

It is found in the cytoplasm. Its activity is regulated as follows. The formation of the proteasomal ATPase PAN-20S proteasome complex, via the docking of the C-termini of PAN into the intersubunit pockets in the alpha-rings, triggers opening of the gate for substrate entry. Interconversion between the open-gate and close-gate conformations leads to a dynamic regulation of the 20S proteasome proteolysis activity. Functionally, component of the proteasome core, a large protease complex with broad specificity involved in protein degradation. The sequence is that of Proteasome subunit alpha from Thermococcus sp. (strain JCM 11816 / KS-1).